We begin with the raw amino-acid sequence, 904 residues long: Trichohyalin-like protein 1 (904 aa).

The EF-hand domain occupies 48–83; sequence CVLHAVEKNSNLLNIDSNGIISFDEFVLAIFNLLNL. Disordered stretches follow at residues 102–792 and 858–890; these read PEKE…CSVE and PYTR…HPQR. Residues 113 to 128 are compositionally biased toward polar residues; that stretch reads QATTGDGQWTVGTSPT. Basic and acidic residues-rich tracts occupy residues 172-185, 222-240, 268-300, 349-371, and 385-398; these read ASEH…HLEG, TERK…EPAR, ATQR…DEPS, NLGE…ETKD, and SDMR…RGPE. Positions 443–452 are enriched in polar residues; the sequence is ETQYLSSEGG. Residues 524-536 show a composition bias toward acidic residues; the sequence is VEEEDGYQGEDPE. Over residues 538–554 the composition is skewed to polar residues; the sequence is PFTQSDEGSSETPNSLA. Positions 555 to 578 are enriched in low complexity; the sequence is SEEGNSSSETGELPVQGDSQSQGD. The span at 586 to 598 shows a compositional bias: polar residues; sequence GGHNNNPDTQRQG. Over residues 759 to 770 the composition is skewed to basic and acidic residues; the sequence is GDQKSPAKKEHN. Polar residues predominate over residues 771–780; that stretch reads SSVPWSSLEK. Residues 881–890 are compositionally biased toward basic and acidic residues; the sequence is LEDKQGHPQR.

This sequence belongs to the S-100 family.

The chain is Trichohyalin-like protein 1 (TCHHL1) from Homo sapiens (Human).